Reading from the N-terminus, the 317-residue chain is Putative S-adenosyl-L-methionine-dependent methyltransferase MSMEG_0093 (317 aa).

Residues Asp134 and 163–164 (DL) contribute to the S-adenosyl-L-methionine site.

The protein belongs to the UPF0677 family.

Its function is as follows. Exhibits S-adenosyl-L-methionine-dependent methyltransferase activity. The protein is Putative S-adenosyl-L-methionine-dependent methyltransferase MSMEG_0093 of Mycolicibacterium smegmatis (strain ATCC 700084 / mc(2)155) (Mycobacterium smegmatis).